A 204-amino-acid chain; its full sequence is MSQLVREFGKDNKSLKEVTESLAQFVSGLERQECAICFGWGHLANSVPPKPPLIRPAGVTLSGKLSGGLSRPSTSLNQLLLGPTRLRCHPGPAMGGRRSGGRICLGDPGAAAIPTTTTAPTATHQPNQQRQQVIPQQMHGLARQYQRSNLVGNVAQYPFGSVANPIQQLISQFLSFYNSQSQYILLIHTKLDRKLHFVDQTGSF.

This is an uncharacterized protein from Stylonychia lemnae (Ciliate).